A 264-amino-acid polypeptide reads, in one-letter code: Ribonuclease HII (264 aa).

The RNase H type-2 domain occupies 33–224 (GPVAGVDEVG…VRRVASGSNT (192 aa)). 3 residues coordinate a divalent metal cation: aspartate 39, glutamate 40, and aspartate 133. The disordered stretch occupies residues 222-264 (SNTAEVADGQPDPRDGTAQTGEGRWSKSSHPATMRATGRAQGT).

This sequence belongs to the RNase HII family. It depends on Mn(2+) as a cofactor. The cofactor is Mg(2+).

It is found in the cytoplasm. It carries out the reaction Endonucleolytic cleavage to 5'-phosphomonoester.. Its function is as follows. Endonuclease that specifically degrades the RNA of RNA-DNA hybrids. The protein is Ribonuclease HII of Mycobacterium bovis (strain BCG / Pasteur 1173P2).